Reading from the N-terminus, the 405-residue chain is Arginine biosynthesis bifunctional protein ArgJ (405 aa).

Positions 152, 178, 189, 276, 400, and 405 each coordinate substrate. The active-site Nucleophile is the Thr189.

The protein belongs to the ArgJ family. As to quaternary structure, heterotetramer of two alpha and two beta chains.

Its subcellular location is the cytoplasm. The catalysed reaction is N(2)-acetyl-L-ornithine + L-glutamate = N-acetyl-L-glutamate + L-ornithine. It catalyses the reaction L-glutamate + acetyl-CoA = N-acetyl-L-glutamate + CoA + H(+). It functions in the pathway amino-acid biosynthesis; L-arginine biosynthesis; L-ornithine and N-acetyl-L-glutamate from L-glutamate and N(2)-acetyl-L-ornithine (cyclic): step 1/1. Its pathway is amino-acid biosynthesis; L-arginine biosynthesis; N(2)-acetyl-L-ornithine from L-glutamate: step 1/4. Catalyzes two activities which are involved in the cyclic version of arginine biosynthesis: the synthesis of N-acetylglutamate from glutamate and acetyl-CoA as the acetyl donor, and of ornithine by transacetylation between N(2)-acetylornithine and glutamate. This Chromobacterium violaceum (strain ATCC 12472 / DSM 30191 / JCM 1249 / CCUG 213 / NBRC 12614 / NCIMB 9131 / NCTC 9757 / MK) protein is Arginine biosynthesis bifunctional protein ArgJ.